A 109-amino-acid polypeptide reads, in one-letter code: Fluoride-specific ion channel FluC (109 aa).

The next 3 membrane-spanning stretches (helical) occupy residues 21 to 41 (LTLN…GFFV), 52 to 72 (ILFS…YFLY), and 84 to 104 (IIFF…GFWI).

This sequence belongs to the fluoride channel Fluc/FEX (TC 1.A.43) family.

Its subcellular location is the cell inner membrane. The catalysed reaction is fluoride(in) = fluoride(out). Fluoride-specific ion channel. Important for reducing fluoride concentration in the cell, thus reducing its toxicity. The chain is Fluoride-specific ion channel FluC from Prochlorococcus marinus (strain MIT 9301).